The following is a 249-amino-acid chain: uncharacterized protein (249 aa).

Residues 1–25 (MRYLNTKNIIAAGVLLSCMSSIAWG) form the signal peptide.

The protein belongs to the periplasmic pilus chaperone family.

It is found in the periplasm. Its function is as follows. Could be required for the biogenesis of a putative fimbria. This is an uncharacterized protein from Escherichia coli (strain K12).